A 390-amino-acid polypeptide reads, in one-letter code: NADH-quinone oxidoreductase subunit H (390 aa).

The next 9 membrane-spanning stretches (helical) occupy residues 4 to 24 (WLLT…ALLT), 78 to 98 (LVYT…FGGI), 120 to 140 (VLAL…GGWA), 157 to 177 (MISY…LVGS), 191 to 211 (GWMI…SFAE), 247 to 266 (YVNM…GGWR), 278 to 298 (IADI…FVFI), 315 to 337 (FGWK…YIAF), and 341 to 360 (WGWW…LLAL).

The protein belongs to the complex I subunit 1 family. NDH-1 is composed of 15 different subunits. Subunits NuoA, H, J, K, L, M, N constitute the membrane sector of the complex.

It localises to the cell membrane. It carries out the reaction a quinone + NADH + 5 H(+)(in) = a quinol + NAD(+) + 4 H(+)(out). Its function is as follows. NDH-1 shuttles electrons from NADH, via FMN and iron-sulfur (Fe-S) centers, to quinones in the respiratory chain. The immediate electron acceptor for the enzyme in this species is believed to be ubiquinone. Couples the redox reaction to proton translocation (for every two electrons transferred, four hydrogen ions are translocated across the cytoplasmic membrane), and thus conserves the redox energy in a proton gradient. This subunit may bind ubiquinone. The polypeptide is NADH-quinone oxidoreductase subunit H (Deinococcus deserti (strain DSM 17065 / CIP 109153 / LMG 22923 / VCD115)).